We begin with the raw amino-acid sequence, 234 residues long: Large ribosomal subunit protein uL1 (234 aa).

It belongs to the universal ribosomal protein uL1 family. As to quaternary structure, part of the 50S ribosomal subunit.

Binds directly to 23S rRNA. The L1 stalk is quite mobile in the ribosome, and is involved in E site tRNA release. In terms of biological role, protein L1 is also a translational repressor protein, it controls the translation of the L11 operon by binding to its mRNA. The polypeptide is Large ribosomal subunit protein uL1 (Pectobacterium carotovorum subsp. carotovorum (strain PC1)).